The chain runs to 235 residues: Ribose-5-phosphate isomerase A (235 aa).

Substrate is bound by residues 32–35 (TGST), 89–92 (DGAD), and 102–105 (KGGG). Glutamate 111 serves as the catalytic Proton acceptor. Lysine 129 is a substrate binding site.

This sequence belongs to the ribose 5-phosphate isomerase family. Homodimer.

The catalysed reaction is aldehydo-D-ribose 5-phosphate = D-ribulose 5-phosphate. The protein operates within carbohydrate degradation; pentose phosphate pathway; D-ribose 5-phosphate from D-ribulose 5-phosphate (non-oxidative stage): step 1/1. Functionally, catalyzes the reversible conversion of ribose-5-phosphate to ribulose 5-phosphate. This chain is Ribose-5-phosphate isomerase A, found in Synechocystis sp. (strain ATCC 27184 / PCC 6803 / Kazusa).